A 236-amino-acid polypeptide reads, in one-letter code: MTVNALLLSSSRVGDTPYLSHAIPFIKPLTTNAQKWIFIPYAGVSMSYDTYLASVVAGLSELRLDISGIHQHPDPRQAIKDADGILIGGGNTFHLLHELYKYDLVHLIREEVMNGKPYIGWSAGSNVSGLSIRTTNDMPIIEPPSFTALNIVPFQLNPHYSNYRAPGHNGETRAQRLLEFTRVDPITPVVGIVEGSALWRQGETLSLLGDNPAYLFCGEQQEIPIPVGSDLSHLLK.

Catalysis depends on charge relay system residues Ser122, Asp137, and His159.

Belongs to the peptidase S51 family.

Its subcellular location is the cytoplasm. It carries out the reaction Dipeptidase E catalyzes the hydrolysis of dipeptides Asp-|-Xaa. It does not act on peptides with N-terminal Glu, Asn or Gln, nor does it cleave isoaspartyl peptides.. Hydrolyzes dipeptides containing N-terminal aspartate residues. May play a role in allowing the cell to use peptide aspartate to spare carbon otherwise required for the synthesis of the aspartate family of amino acids. This Shewanella sp. (strain MR-4) protein is Peptidase E.